Here is a 785-residue protein sequence, read N- to C-terminus: Endonuclease MutS2 (785 aa).

335–342 (GPNTGGKT) is a binding site for ATP. In terms of domain architecture, Smr spans 710-785 (LDLRGERYED…GNGVTIVEFK (76 aa)).

It belongs to the DNA mismatch repair MutS family. MutS2 subfamily. As to quaternary structure, homodimer. Binds to stalled ribosomes, contacting rRNA.

Its function is as follows. Endonuclease that is involved in the suppression of homologous recombination and thus may have a key role in the control of bacterial genetic diversity. In terms of biological role, acts as a ribosome collision sensor, splitting the ribosome into its 2 subunits. Detects stalled/collided 70S ribosomes which it binds and splits by an ATP-hydrolysis driven conformational change. Acts upstream of the ribosome quality control system (RQC), a ribosome-associated complex that mediates the extraction of incompletely synthesized nascent chains from stalled ribosomes and their subsequent degradation. Probably generates substrates for RQC. This chain is Endonuclease MutS2, found in Listeria welshimeri serovar 6b (strain ATCC 35897 / DSM 20650 / CCUG 15529 / CIP 8149 / NCTC 11857 / SLCC 5334 / V8).